Consider the following 161-residue polypeptide: Thy-1 membrane glycoprotein (161 aa).

An N-terminal signal peptide occupies residues 1 to 19 (MNLAISIALLLTVLQVSRG). Position 20 is a pyrrolidone carboxylic acid (glutamine 20). In terms of domain architecture, Ig-like V-type spans 20-126 (QKVTSLTACL…SQNVTVLRDK (107 aa)). Cystine bridges form between cysteine 28–cysteine 130 and cysteine 38–cysteine 104. N-linked (GlcNAc...) asparagine glycans are attached at residues asparagine 42 and asparagine 79. A Phosphoserine modification is found at serine 82. The N-linked (GlcNAc...) asparagine glycan is linked to asparagine 119. A lipid anchor (GPI-anchor amidated cysteine; alternate) is attached at cysteine 130. A propeptide spans 131 to 161 (EGISLLAQNTSWLXLLLLSLSLLQATDFMSL) (removed in mature form). Asparagine 139 is a glycosylation site (N-linked (GlcNAc...) asparagine).

The protein resides in the cell membrane. May play a role in cell-cell or cell-ligand interactions during synaptogenesis and other events in the brain. The sequence is that of Thy-1 membrane glycoprotein (THY1) from Macaca mulatta (Rhesus macaque).